The chain runs to 882 residues: MAVRSRRPWMSVALGLVLGFTAASWLIAPRVAELSERKRRGSSLCSYYGRSAAGPRAGAQQPLPQPQSRPRQEQSPPPARQDLQGPPLPEAAPGITSFRSSPWQQPPPLQQRRRGREPEGATGLPGAPAAEGEPEEEDGGAAGQRRDGRPGSSHNGSGDGGAAAPSARPRDFLYVGVMTAQKYLGSRALAAQRTWARFIPGRVEFFSSQQPPNAGQPPPPLPVIALPGVDDSYPPQKKSFMMIKYMHDHYLDKYEWFMRADDDVYIKGDKLEEFLRSLNSSKPLYLGQTGLGNIEELGKLGLEPGENFCMGGPGMIFSREVLRRMVPHIGECLREMYTTHEDVEVGRCVRRFGGTQCVWSYEMQQLFHENYEHNRKGYIQDLHNSKIHAAITLHPNKRPAYQYRLHNYMLSRKISELRYRTIQLHRESALMSKLSNTEVSKEDQQLGVIPSFNHFQPRERNEVIEWEFLTGKLLYSAAENQPPRQSLSSILRTALDDTVLQVMEMINENAKSRGRLIDFKEIQYGYRRVNPMHGVEYILDLLLLYKRHKGRKLTVPVRRHAYLQQLFSKPFFRETEELDVNSLVESINSETQSFSFISNSLKILSSFQGAKEMGGHNEKKVHILVPLIGRYDIFLRFMENFENMCLIPKQNVKLVIILFSRDSGQDSSKHIELIKGYQNKYPKAEMTLIPMKGEFSRGLGLEMASAQFDNDTLLLFCDVDLIFREDFLQRCRDNTIQGQQVYYPIIFSQYDPKVTNGGNPPTDDYFIFSKKTGFWRDYGYGITCIYKSDLLGAGGFDTSIQGWGLEDVDLYNKVILSGLRPFRSQEVGVVHIFHPVHCDPNLDPKQYKMCLGSKASTFASTMQLAELWLEKHLGVRYNRTLS.

The Cytoplasmic portion of the chain corresponds to 1–7 (MAVRSRR). The helical; Signal-anchor for type II membrane protein transmembrane segment at 8-28 (PWMSVALGLVLGFTAASWLIA) threads the bilayer. Residues 29–882 (PRVAELSERK…LGVRYNRTLS (854 aa)) lie on the Lumenal side of the membrane. Residues 46–167 (SYYGRSAAGP…GDGGAAAPSA (122 aa)) form a disordered region. Composition is skewed to low complexity over residues 59 to 69 (AQQPLPQPQSR) and 120 to 131 (GATGLPGAPAAE). 3 N-linked (GlcNAc...) asparagine glycosylation sites follow: Asn-155, Asn-279, and Asn-710. A divalent metal cation contacts are provided by Asp-720 and His-834. Residue Asn-878 is glycosylated (N-linked (GlcNAc...) asparagine).

The protein belongs to the chondroitin N-acetylgalactosaminyltransferase family. The cofactor is Co(2+). Mn(2+) is required as a cofactor. Requires Cd(2+) as cofactor. In terms of tissue distribution, detected at low levels in brain, cerebral cortex, uterus and small intestine.

It is found in the golgi apparatus. Its subcellular location is the golgi stack membrane. It carries out the reaction 3-O-(beta-D-GlcA-(1-&gt;3)-beta-D-GalNAc-(1-&gt;4)-beta-D-GlcA-(1-&gt;3)-beta-D-Gal-(1-&gt;3)-beta-D-Gal-(1-&gt;4)-beta-D-Xyl)-L-seryl-[protein] + UDP-N-acetyl-alpha-D-galactosamine = 3-O-(beta-D-GalNAc-(1-&gt;4)-beta-D-GlcA-(1-&gt;3)-beta-D-GalNAc-(1-&gt;4)-beta-D-GlcA-(1-&gt;3)-beta-D-Gal-(1-&gt;3)-beta-D-Gal-(1-&gt;4)-beta-D-Xyl)-L-seryl-[protein] + UDP + H(+). The enzyme catalyses 3-O-{beta-D-GlcA-(1-&gt;3)-[beta-D-GalNAc-(1-&gt;4)-beta-D-GlcA-(1-&gt;3)](n)-beta-D-GalNAc-(1-&gt;4)-beta-D-GlcA-(1-&gt;3)-beta-D-Gal-(1-&gt;3)-beta-D-Gal-(1-&gt;4)-beta-D-Xyl}-L-seryl-[protein] + UDP-N-acetyl-alpha-D-galactosamine = 3-O-{[beta-D-GalNAc-(1-&gt;4)-beta-D-GlcA-(1-&gt;3)](n+1)-beta-D-GalNAc-(1-&gt;4)-beta-D-GlcA-(1-&gt;3)-beta-D-Gal-(1-&gt;3)-beta-D-Gal-(1-&gt;4)-beta-D-Xyl}-L-seryl-[protein] + UDP + H(+). It catalyses the reaction 3-O-(beta-D-GalNAc-(1-&gt;4)-beta-D-GlcA-(1-&gt;3)-beta-D-Gal-(1-&gt;3)-beta-D-Gal-(1-&gt;4)-beta-D-Xyl)-L-seryl-[protein] + UDP-alpha-D-glucuronate = 3-O-(beta-D-GlcA-(1-&gt;3)-beta-D-GalNAc-(1-&gt;4)-beta-D-GlcA-(1-&gt;3)-beta-D-Gal-(1-&gt;3)-beta-D-Gal-(1-&gt;4)-beta-D-Xyl)-L-seryl-[protein] + UDP + H(+). The catalysed reaction is 3-O-{[beta-D-GalNAc-(1-&gt;4)-beta-D-GlcA-(1-&gt;3)](n)-beta-D-GalNAc-(1-&gt;4)-beta-D-GlcA-(1-&gt;3)-beta-D-Gal-(1-&gt;3)-beta-D-Gal-(1-&gt;4)-beta-D-Xyl}-L-seryl-[protein] + UDP-alpha-D-glucuronate = 3-O-{beta-D-GlcA-(1-&gt;3)-[beta-D-GalNAc-(1-&gt;4)-beta-D-GlcA-(1-&gt;3)](n)-beta-D-GalNAc-(1-&gt;4)-beta-D-GlcA-(1-&gt;3)-beta-D-Gal-(1-&gt;3)-beta-D-Gal-(1-&gt;4)-beta-D-Xyl}-L-seryl-[protein] + UDP + H(+). Has both beta-1,3-glucuronic acid and beta-1,4-N-acetylgalactosamine transferase activity. Transfers glucuronic acid (GlcUA) from UDP-GlcUA and N-acetylgalactosamine (GalNAc) from UDP-GalNAc to the non-reducing end of the elongating chondroitin polymer. Specific activity is much reduced compared to CHSY1. The sequence is that of Chondroitin sulfate synthase 3 (CHSY3) from Homo sapiens (Human).